The sequence spans 441 residues: ATP-dependent protease ATPase subunit HslU (441 aa).

Residues isoleucine 18, 60-65 (GVGKTE), aspartate 254, glutamate 319, and arginine 391 contribute to the ATP site.

Belongs to the ClpX chaperone family. HslU subfamily. A double ring-shaped homohexamer of HslV is capped on each side by a ring-shaped HslU homohexamer. The assembly of the HslU/HslV complex is dependent on binding of ATP.

It localises to the cytoplasm. Its function is as follows. ATPase subunit of a proteasome-like degradation complex; this subunit has chaperone activity. The binding of ATP and its subsequent hydrolysis by HslU are essential for unfolding of protein substrates subsequently hydrolyzed by HslV. HslU recognizes the N-terminal part of its protein substrates and unfolds these before they are guided to HslV for hydrolysis. The polypeptide is ATP-dependent protease ATPase subunit HslU (Shewanella frigidimarina (strain NCIMB 400)).